A 375-amino-acid polypeptide reads, in one-letter code: 23S rRNA (uracil(747)-C(5))-methyltransferase RlmC (375 aa).

Cysteine 3, cysteine 11, cysteine 14, and cysteine 87 together coordinate [4Fe-4S] cluster. Residues glutamine 212, phenylalanine 241, glutamate 262, and asparagine 307 each contribute to the S-adenosyl-L-methionine site. The Nucleophile role is filled by cysteine 334.

It belongs to the class I-like SAM-binding methyltransferase superfamily. RNA M5U methyltransferase family. RlmC subfamily.

The catalysed reaction is uridine(747) in 23S rRNA + S-adenosyl-L-methionine = 5-methyluridine(747) in 23S rRNA + S-adenosyl-L-homocysteine + H(+). Functionally, catalyzes the formation of 5-methyl-uridine at position 747 (m5U747) in 23S rRNA. In Pectobacterium atrosepticum (strain SCRI 1043 / ATCC BAA-672) (Erwinia carotovora subsp. atroseptica), this protein is 23S rRNA (uracil(747)-C(5))-methyltransferase RlmC.